Reading from the N-terminus, the 747-residue chain is Catalase-peroxidase 1 (747 aa).

Over residues 1–22 (MTDTSDARPPHSDDKTRSHSES) the composition is skewed to basic and acidic residues. The disordered stretch occupies residues 1-39 (MTDTSDARPPHSDDKTRSHSESENPAIDSPEPKVHAPLT). Positions 112–240 (WHAAGTYRIF…FGATTMGLIY (129 aa)) form a cross-link, tryptophyl-tyrosyl-methioninium (Trp-Tyr) (with M-266). His-113 serves as the catalytic Proton acceptor. A cross-link (tryptophyl-tyrosyl-methioninium (Tyr-Met) (with W-112)) is located at residues 240–266 (YVNPEGPEGKPDPLAAAHDIRETFGRM). Residue His-281 coordinates heme b.

Belongs to the peroxidase family. Peroxidase/catalase subfamily. Homodimer or homotetramer. Heme b is required as a cofactor. Formation of the three residue Trp-Tyr-Met cross-link is important for the catalase, but not the peroxidase activity of the enzyme.

It catalyses the reaction H2O2 + AH2 = A + 2 H2O. The catalysed reaction is 2 H2O2 = O2 + 2 H2O. Its function is as follows. Bifunctional enzyme with both catalase and broad-spectrum peroxidase activity. This is Catalase-peroxidase 1 from Mycolicibacterium vanbaalenii (strain DSM 7251 / JCM 13017 / BCRC 16820 / KCTC 9966 / NRRL B-24157 / PYR-1) (Mycobacterium vanbaalenii).